Consider the following 92-residue polypeptide: Small ribosomal subunit protein uS19c (92 aa).

This sequence belongs to the universal ribosomal protein uS19 family.

It is found in the plastid. The protein resides in the chloroplast. In terms of biological role, protein S19 forms a complex with S13 that binds strongly to the 16S ribosomal RNA. This is Small ribosomal subunit protein uS19c from Dioscorea elephantipes (Elephant's foot yam).